An 876-amino-acid chain; its full sequence is MKKMKASEIRQKYLDFFVEKGHMIEPSAPLVPIDDDSLLWINSGVATLKKYFDGRETPKKPRIVNSQKAIRTNDIENVGFTARHHTFFEMLGNFSIGDYFKHEAIEFAWEFLTSDKWMGMEPEKLYVTIHPEDTEAFRIWHEDIGLEESRIIRIEGNFWDIGEGPSGPNTEIFYDRGSAYGKDDPAEEMYPGGENERYLEVWNLVFSEFNHNKDNTYTPLPNKNIDTGMGLERMTSISQNVRTNYETDLFMPIIKEVEHVSGKKYLIDDAQDVAFKVIADHIRTISFAIADGALPANEGRGYVLRRLLRRAVRFSQSLGINEPFMYKLVDIVADIMEPYYPNVKDKSNFIKRVIKSEEERFHETLEEGLTILNELIKEAKNSDQVIKGHDAFKLYDTYGFPIELTEELATQENLSVDMPTFEQEMQQQRDRARQARQNSQSMQVQSEVLKNIQDESQFVGYETTDYQSLITHIIYNGEEVKHVEAGETIYFILRETPFYAVSGGQVADKGTVGNESFEINVTDVTKAPNGQNLHKGIVQFGEATQNAKVEARVNKEDRRLIQKNHSATHLLHAALKEVLGDHVNQAGSLVEPERLRFDFSHFGPMTQEEINLVERRVNEEIWRAIDVRIQEMSIEEAKSIGAMALFGEKYGDIVRVVNMAPFSIELCGGIHVNNTAEIGLFKIVSESGTGAGVRRIEALTGKGAFLHLEEIETQFNNIKNHLKVKSDNQVVEKVKQLQEEEKGLLKQLEQRNKEITSLKMGNIEEQVELINNLKVLATEVEIPNPKAIRSTMDDFKSKLQDTIIVLVGQVDGKVSVIATVPKSLTNQVKAGDLIKNMTPIIGGKGGGRPDMAQGGGTQPEKITEALRFIKDYIKNL.

Residues histidine 565, histidine 569, cysteine 667, and histidine 671 each coordinate Zn(2+).

Belongs to the class-II aminoacyl-tRNA synthetase family. Zn(2+) is required as a cofactor.

The protein localises to the cytoplasm. The enzyme catalyses tRNA(Ala) + L-alanine + ATP = L-alanyl-tRNA(Ala) + AMP + diphosphate. Functionally, catalyzes the attachment of alanine to tRNA(Ala) in a two-step reaction: alanine is first activated by ATP to form Ala-AMP and then transferred to the acceptor end of tRNA(Ala). Also edits incorrectly charged Ser-tRNA(Ala) and Gly-tRNA(Ala) via its editing domain. The sequence is that of Alanine--tRNA ligase from Staphylococcus epidermidis (strain ATCC 35984 / DSM 28319 / BCRC 17069 / CCUG 31568 / BM 3577 / RP62A).